We begin with the raw amino-acid sequence, 74 residues long: Anaphase-promoting complex subunit 13 (74 aa).

Positions 33-56 (LSELPEPEQDNGGTTESVKEQEMK) are disordered.

The protein belongs to the APC13 family. The mammalian APC/C is composed at least of 14 distinct subunits ANAPC1, ANAPC2, CDC27/APC3, ANAPC4, ANAPC5, CDC16/APC6, ANAPC7, CDC23/APC8, ANAPC10, ANAPC11, CDC26/APC12, ANAPC13, ANAPC15 and ANAPC16 that assemble into a complex of at least 19 chains with a combined molecular mass of around 1.2 MDa; APC/C interacts with FZR1 and FBXO5.

The protein localises to the nucleus. It functions in the pathway protein modification; protein ubiquitination. Functionally, component of the anaphase promoting complex/cyclosome (APC/C), a cell cycle-regulated E3 ubiquitin ligase that controls progression through mitosis and the G1 phase of the cell cycle. The APC/C complex acts by mediating ubiquitination and subsequent degradation of target proteins: it mainly mediates the formation of 'Lys-11'-linked polyubiquitin chains and, to a lower extent, the formation of 'Lys-48'- and 'Lys-63'-linked polyubiquitin chains. The APC/C complex catalyzes assembly of branched 'Lys-11'-/'Lys-48'-linked branched ubiquitin chains on target proteins. The protein is Anaphase-promoting complex subunit 13 (Anapc13) of Mus musculus (Mouse).